Reading from the N-terminus, the 405-residue chain is Pentatricopeptide repeat-containing protein At1g11630, mitochondrial (405 aa).

A mitochondrion-targeting transit peptide spans 1–72 (MAFLFRIRTS…RSTSLSPDYH (72 aa)). 9 PPR repeats span residues 74–108 (DRIIFSVAVVTLAREKHFVAVSQLLDGFIQNQPDP), 110–144 (SESFAVRAIILYGRANMLDRSIQTFRNLEQYEIPR), 145–180 (TVKSLNALLFACLMAKDYKEANRVYLEMPKMYGIEP), 181–215 (DLETYNRMIRVLCESGSTSSSYSIVAEMERKWIKP), 216–250 (TAASFGLMIDGFYKEEKFDEVRKVMRMMDEFGVHV), 251–285 (GVATYNIMIQCLCKRKKSAEAKALIDGVMSCRMRP), 286–320 (NSVTYSLLIHGFCSEENLDEAMNLFEVMVCNGYKP), 321–355 (DSECYFTLIHCLCKGGDFETALILCRESMEKNWVP), and 356–386 (SFSVMKWLVNGLASRSKVDEAKELIAVVKEK).

The protein belongs to the PPR family. P subfamily.

The protein localises to the mitochondrion. This Arabidopsis thaliana (Mouse-ear cress) protein is Pentatricopeptide repeat-containing protein At1g11630, mitochondrial.